The following is a 163-amino-acid chain: NADH-quinone oxidoreductase subunit I (163 aa).

2 4Fe-4S ferredoxin-type domains span residues 55 to 84 (RRYE…IESE) and 94 to 123 (TQYD…ETRV). The [4Fe-4S] cluster site is built by cysteine 64, cysteine 67, cysteine 70, cysteine 74, cysteine 103, cysteine 106, cysteine 109, and cysteine 113.

It belongs to the complex I 23 kDa subunit family. In terms of assembly, NDH-1 is composed of 14 different subunits. Subunits NuoA, H, J, K, L, M, N constitute the membrane sector of the complex. It depends on [4Fe-4S] cluster as a cofactor.

It localises to the cell inner membrane. The catalysed reaction is a quinone + NADH + 5 H(+)(in) = a quinol + NAD(+) + 4 H(+)(out). Its function is as follows. NDH-1 shuttles electrons from NADH, via FMN and iron-sulfur (Fe-S) centers, to quinones in the respiratory chain. The immediate electron acceptor for the enzyme in this species is believed to be ubiquinone. Couples the redox reaction to proton translocation (for every two electrons transferred, four hydrogen ions are translocated across the cytoplasmic membrane), and thus conserves the redox energy in a proton gradient. The chain is NADH-quinone oxidoreductase subunit I from Hydrogenovibrio crunogenus (strain DSM 25203 / XCL-2) (Thiomicrospira crunogena).